Here is a 638-residue protein sequence, read N- to C-terminus: 1-deoxy-D-xylulose-5-phosphate synthase (638 aa).

Residues His-78 and 119–121 (AHS) each bind thiamine diphosphate. Asp-150 provides a ligand contact to Mg(2+). Thiamine diphosphate contacts are provided by residues 151–152 (GS), Asn-179, Tyr-288, and Glu-370. Residue Asn-179 participates in Mg(2+) binding.

Belongs to the transketolase family. DXPS subfamily. Homodimer. Mg(2+) serves as cofactor. It depends on thiamine diphosphate as a cofactor.

The catalysed reaction is D-glyceraldehyde 3-phosphate + pyruvate + H(+) = 1-deoxy-D-xylulose 5-phosphate + CO2. Its pathway is metabolic intermediate biosynthesis; 1-deoxy-D-xylulose 5-phosphate biosynthesis; 1-deoxy-D-xylulose 5-phosphate from D-glyceraldehyde 3-phosphate and pyruvate: step 1/1. Catalyzes the acyloin condensation reaction between C atoms 2 and 3 of pyruvate and glyceraldehyde 3-phosphate to yield 1-deoxy-D-xylulose-5-phosphate (DXP). In Brucella anthropi (strain ATCC 49188 / DSM 6882 / CCUG 24695 / JCM 21032 / LMG 3331 / NBRC 15819 / NCTC 12168 / Alc 37) (Ochrobactrum anthropi), this protein is 1-deoxy-D-xylulose-5-phosphate synthase.